A 692-amino-acid chain; its full sequence is Glycine--tRNA ligase beta subunit (692 aa).

The protein belongs to the class-II aminoacyl-tRNA synthetase family. In terms of assembly, tetramer of two alpha and two beta subunits.

It localises to the cytoplasm. It catalyses the reaction tRNA(Gly) + glycine + ATP = glycyl-tRNA(Gly) + AMP + diphosphate. The sequence is that of Glycine--tRNA ligase beta subunit from Pseudoalteromonas atlantica (strain T6c / ATCC BAA-1087).